Reading from the N-terminus, the 262-residue chain is 4-hydroxy-2-oxo-heptane-1,7-dioate aldolase (262 aa).

Catalysis depends on His45, which acts as the Proton acceptor. Gln147 serves as a coordination point for substrate. Glu149 contributes to the a divalent metal cation binding site. Residues Ala174 and Asp175 each coordinate substrate. Residue Asp175 coordinates a divalent metal cation.

It belongs to the HpcH/HpaI aldolase family. Homohexamer; trimer of dimers. The cofactor is a divalent metal cation.

It carries out the reaction 4-hydroxy-2-oxoheptanedioate = succinate semialdehyde + pyruvate. It participates in aromatic compound metabolism; 4-hydroxyphenylacetate degradation; pyruvate and succinate semialdehyde from 4-hydroxyphenylacetate: step 7/7. Catalyzes the reversible retro-aldol cleavage of 4-hydroxy-2-ketoheptane-1,7-dioate (HKHD) to pyruvate and succinic semialdehyde. This is 4-hydroxy-2-oxo-heptane-1,7-dioate aldolase from Shigella sonnei (strain Ss046).